Consider the following 115-residue polypeptide: Prefoldin subunit beta (115 aa).

The protein belongs to the prefoldin subunit beta family. In terms of assembly, heterohexamer of two alpha and four beta subunits.

Its subcellular location is the cytoplasm. Its function is as follows. Molecular chaperone capable of stabilizing a range of proteins. Seems to fulfill an ATP-independent, HSP70-like function in archaeal de novo protein folding. The chain is Prefoldin subunit beta from Methanococcus aeolicus (strain ATCC BAA-1280 / DSM 17508 / OCM 812 / Nankai-3).